The chain runs to 223 residues: UPF0758 protein Plut_0598 (223 aa).

An MPN domain is found at 100–222 (RVQGAKDVFE…WFSFRESNLL (123 aa)). Positions 171, 173, and 184 each coordinate Zn(2+). The short motif at 171–184 (HNHPSGDTEPSNAD) is the JAMM motif element.

This sequence belongs to the UPF0758 family.

The sequence is that of UPF0758 protein Plut_0598 from Chlorobium luteolum (strain DSM 273 / BCRC 81028 / 2530) (Pelodictyon luteolum).